The sequence spans 460 residues: Cyclin-T1-2 (460 aa).

Disordered stretches follow at residues 1–20 (MDEALNENASGSESDASSVA) and 285–345 (QPIS…QDHS). Positions 314–324 (SDDHSVHDGSR) are enriched in basic and acidic residues. Polar residues predominate over residues 332–345 (NSESEAQKNLQDHS).

Belongs to the cyclin family. Cyclin T subfamily.

The polypeptide is Cyclin-T1-2 (CYCT1-2) (Arabidopsis thaliana (Mouse-ear cress)).